The primary structure comprises 140 residues: 3-hydroxyacyl-[acyl-carrier-protein] dehydratase FabZ (140 aa).

His-47 is a catalytic residue.

The protein belongs to the thioester dehydratase family. FabZ subfamily.

The protein localises to the cytoplasm. The enzyme catalyses a (3R)-hydroxyacyl-[ACP] = a (2E)-enoyl-[ACP] + H2O. Functionally, involved in unsaturated fatty acids biosynthesis. Catalyzes the dehydration of short chain beta-hydroxyacyl-ACPs and long chain saturated and unsaturated beta-hydroxyacyl-ACPs. The polypeptide is 3-hydroxyacyl-[acyl-carrier-protein] dehydratase FabZ (Streptococcus pneumoniae serotype 2 (strain D39 / NCTC 7466)).